A 226-amino-acid polypeptide reads, in one-letter code: ATP-dependent dethiobiotin synthetase BioD (226 aa).

13 to 18 (DVGKTL) provides a ligand contact to ATP. Residue Thr17 participates in Mg(2+) binding. Residue Lys38 is part of the active site. ATP-binding positions include Asp55, 117–120 (EGAG), 177–178 (NR), 206–208 (PFV), and Glu213. Mg(2+)-binding residues include Asp55 and Glu117.

It belongs to the dethiobiotin synthetase family. Homodimer. Requires Mg(2+) as cofactor.

It is found in the cytoplasm. The enzyme catalyses (7R,8S)-7,8-diammoniononanoate + CO2 + ATP = (4R,5S)-dethiobiotin + ADP + phosphate + 3 H(+). It participates in cofactor biosynthesis; biotin biosynthesis; biotin from 7,8-diaminononanoate: step 1/2. In terms of biological role, catalyzes a mechanistically unusual reaction, the ATP-dependent insertion of CO2 between the N7 and N8 nitrogen atoms of 7,8-diaminopelargonic acid (DAPA, also called 7,8-diammoniononanoate) to form a ureido ring. This Aeromonas salmonicida (strain A449) protein is ATP-dependent dethiobiotin synthetase BioD.